Reading from the N-terminus, the 316-residue chain is RNA interference defective protein 11 (316 aa).

The segment at 183–218 (CYINFNCQTSKVMFGCGHVYCEQCLNSWNDKPCSVC) adopts an RING-type; degenerate zinc-finger fold.

As to quaternary structure, interacts (via RING-type zinc finger domain) with rde-10.

Functionally, in complex with rde-10, required in the endogenous and exogenous siRNA pathway for biogenesis and accumulation of secondary small interfering RNA (siRNA) intermediates, such as 22G-siRNAs derived from ergo-1 targets. The protein is RNA interference defective protein 11 of Caenorhabditis elegans.